The chain runs to 1172 residues: Pesticidal crystal protein Cry1Ha (1172 aa).

It belongs to the delta endotoxin family.

In terms of biological role, promotes colloidosmotic lysis by binding to the midgut epithelial cells of insects. This is Pesticidal crystal protein Cry1Ha (cry1Ha) from Bacillus thuringiensis.